The primary structure comprises 428 residues: Serine--tRNA ligase (428 aa).

235 to 237 (TAE) provides a ligand contact to L-serine. 266–268 (RSE) lines the ATP pocket. Glu289 provides a ligand contact to L-serine. Residue 353-356 (EISS) participates in ATP binding. Ser389 contributes to the L-serine binding site.

This sequence belongs to the class-II aminoacyl-tRNA synthetase family. Type-1 seryl-tRNA synthetase subfamily. Homodimer. The tRNA molecule binds across the dimer.

The protein resides in the cytoplasm. The enzyme catalyses tRNA(Ser) + L-serine + ATP = L-seryl-tRNA(Ser) + AMP + diphosphate + H(+). It carries out the reaction tRNA(Sec) + L-serine + ATP = L-seryl-tRNA(Sec) + AMP + diphosphate + H(+). Its pathway is aminoacyl-tRNA biosynthesis; selenocysteinyl-tRNA(Sec) biosynthesis; L-seryl-tRNA(Sec) from L-serine and tRNA(Sec): step 1/1. Functionally, catalyzes the attachment of serine to tRNA(Ser). Is also able to aminoacylate tRNA(Sec) with serine, to form the misacylated tRNA L-seryl-tRNA(Sec), which will be further converted into selenocysteinyl-tRNA(Sec). This is Serine--tRNA ligase from Shewanella baltica (strain OS223).